Consider the following 130-residue polypeptide: Small ribosomal subunit protein uS11 (130 aa).

A disordered region spans residues 108–130 (IEDVTPIPHDGTGRPGGKRGRRV).

This sequence belongs to the universal ribosomal protein uS11 family. Part of the 30S ribosomal subunit.

In terms of biological role, located on the platform of the 30S subunit. The protein is Small ribosomal subunit protein uS11 of Methanothermobacter thermautotrophicus (strain ATCC 29096 / DSM 1053 / JCM 10044 / NBRC 100330 / Delta H) (Methanobacterium thermoautotrophicum).